The sequence spans 526 residues: AAA ATPase forming ring-shaped complexes (526 aa).

Positions 1 to 18 (MGDMASSTDPAAHNSFSD) are enriched in polar residues. A disordered region spans residues 1 to 20 (MGDMASSTDPAAHNSFSDFN). Residues 20–59 (NREEMTRLADNVRSLQRTNQDLSARNTKLAEMLKSSRDKL) adopt a coiled-coil conformation. 257–262 (GCGKTL) contributes to the ATP binding site.

Belongs to the AAA ATPase family. Homohexamer. Assembles into a hexameric ring structure.

The chain is AAA ATPase forming ring-shaped complexes from Corynebacterium efficiens (strain DSM 44549 / YS-314 / AJ 12310 / JCM 11189 / NBRC 100395).